A 213-amino-acid chain; its full sequence is Na(+)-translocating NADH-quinone reductase subunit D (213 aa).

7 helical membrane passes run 14–34, 42–62, 77–97, 101–121, 131–151, 154–174, and 183–203; these read ALWI…ALAV, LTMG…VSLL, IIIS…FFNI, LSVF…AESM, FLDG…ISII, LFGF…YASA, and LGLM…VWLV.

This sequence belongs to the NqrDE/RnfAE family. In terms of assembly, composed of six subunits; NqrA, NqrB, NqrC, NqrD, NqrE and NqrF.

The protein localises to the cell inner membrane. The enzyme catalyses a ubiquinone + n Na(+)(in) + NADH + H(+) = a ubiquinol + n Na(+)(out) + NAD(+). NQR complex catalyzes the reduction of ubiquinone-1 to ubiquinol by two successive reactions, coupled with the transport of Na(+) ions from the cytoplasm to the periplasm. NqrA to NqrE are probably involved in the second step, the conversion of ubisemiquinone to ubiquinol. The polypeptide is Na(+)-translocating NADH-quinone reductase subunit D (Chlamydia muridarum (strain MoPn / Nigg)).